The chain runs to 494 residues: Alpha-amylase B (494 aa).

Positions 1 to 18 (MFLAKSIVCLALLAVANA) are cleaved as a signal peptide. Gln19 carries the post-translational modification Pyrrolidone carboxylic acid. Cys46 and Cys102 are disulfide-bonded. Residues Asn116, Arg165, and Asp174 each contribute to the Ca(2+) site. A disulfide bridge connects residues Cys153 and Cys167. Residue Arg202 coordinates chloride. Catalysis depends on Asp204, which acts as the Nucleophile. His208 serves as a coordination point for Ca(2+). Catalysis depends on Glu241, which acts as the Proton donor. Positions 304 and 343 each coordinate chloride. 2 disulfides stabilise this stretch: Cys376-Cys382 and Cys448-Cys460.

The protein belongs to the glycosyl hydrolase 13 family. As to quaternary structure, monomer. It depends on Ca(2+) as a cofactor. The cofactor is chloride.

It carries out the reaction Endohydrolysis of (1-&gt;4)-alpha-D-glucosidic linkages in polysaccharides containing three or more (1-&gt;4)-alpha-linked D-glucose units.. This Drosophila yakuba (Fruit fly) protein is Alpha-amylase B (Amy-d).